The primary structure comprises 600 residues: Proline--tRNA ligase (600 aa).

It belongs to the class-II aminoacyl-tRNA synthetase family. ProS type 1 subfamily. Homodimer.

The protein resides in the cytoplasm. It carries out the reaction tRNA(Pro) + L-proline + ATP = L-prolyl-tRNA(Pro) + AMP + diphosphate. Catalyzes the attachment of proline to tRNA(Pro) in a two-step reaction: proline is first activated by ATP to form Pro-AMP and then transferred to the acceptor end of tRNA(Pro). As ProRS can inadvertently accommodate and process non-cognate amino acids such as alanine and cysteine, to avoid such errors it has two additional distinct editing activities against alanine. One activity is designated as 'pretransfer' editing and involves the tRNA(Pro)-independent hydrolysis of activated Ala-AMP. The other activity is designated 'posttransfer' editing and involves deacylation of mischarged Ala-tRNA(Pro). The misacylated Cys-tRNA(Pro) is not edited by ProRS. This is Proline--tRNA ligase from Prochlorococcus marinus (strain AS9601).